The following is a 298-amino-acid chain: Protein pxr1 (298 aa).

Residues 1 to 11 (MGLAAPRKRTK) are compositionally biased toward basic residues. Positions 1 to 23 (MGLAAPRKRTKISHDPNNTNWAR) are disordered. In terms of domain architecture, G-patch spans 25-79 (TSGFGHKILSSQGWTPGSFLGARDAAHADMFTAASAGHIRVVVKDDTLGLGARAG). Residues 145 to 274 (LPERESVQQS…RPLGRQIVRG (130 aa)) form a disordered region. Positions 151 to 164 (VQQSRAAVETSDSN) are enriched in polar residues. Basic residues predominate over residues 199–222 (REKKEKKDKKEKKEKKDKKDKKRK). The segment covering 247–256 (GLESDSTSVS) has biased composition (polar residues).

It belongs to the PINX1 family.

It is found in the nucleus. The protein localises to the nucleolus. Functionally, involved in rRNA-processing at A0, A1 and A2 sites and negatively regulates telomerase. The polypeptide is Protein pxr1 (pxr1) (Aspergillus terreus (strain NIH 2624 / FGSC A1156)).